The chain runs to 1097 residues: Apolipoprotein B receptor (1097 aa).

Disordered regions lie at residues 64-249 (QEDL…KGEE), 262-376 (AWGT…WTTS), 410-739 (EEEG…SRRG), 789-866 (GWDS…ARAE), and 889-1097 (VGWQ…PKPQ). Composition is skewed to basic and acidic residues over residues 83–92 (GPGDDRRHEV), 158–177 (ERQE…RSWE), and 185–208 (VRAR…ETEG). Residues 209–218 (KAGAVGPKAA) show a composition bias toward low complexity. Basic and acidic residues-rich tracts occupy residues 219–232 (GDNR…READ) and 279–302 (GREE…EEAR). Residues 312 to 330 (TASGGEEAETASGGEEAGT) show a composition bias toward low complexity. Over residues 331–362 (ASGGEEAGIASGGEAGTASGGEEAGTASGGEE) the composition is skewed to gly residues. Residue Ser-458 is modified to Phosphoserine. Basic and acidic residues-rich tracts occupy residues 463 to 487 (VDLR…RMEE) and 496 to 505 (EERGSSRDPV). Ser-510 is modified (phosphoserine). Position 572 is a phosphothreonine (Thr-572). Ser-594 is subject to Phosphoserine. 2 stretches are compositionally biased toward basic and acidic residues: residues 594-606 (SKEE…EAGP) and 626-637 (NRTRKDMERGNT). Positions 640 to 652 (DAADGEQREEEET) are enriched in acidic residues. Basic and acidic residues-rich tracts occupy residues 791–800 (DSKEKEEAAA), 892–918 (QERE…RLLD), and 928–950 (RRAE…EEQP). Residues 1000–1017 (SRVHLSRSSSQRRSRPSF) are compositionally biased toward basic residues. The segment covering 1041–1050 (APEQRPLQLE) has biased composition (low complexity).

As to quaternary structure, homodimer. In terms of processing, there are 2 forms in macrophages, the membrane-binding proteins 200 kDa (MBP 200) and 235 kDa (MBP 235), that can be reduced into a single active ligand-binding species with intermediate mobility (MBP 200R). In terms of tissue distribution, expressed in peripheral blood leukocytes &gt; bone marrow = spleen &gt; lymph node, and only faintly visible in appendix and thymus. Expressed in the brain, heart, kidney, liver, lung, pancreas, and placenta. Expressed primarily by reticuloendothelial cells: monocytes, macrophages, and endothelial cells. Expressed in atherosclerotic lesion foam cells.

Its subcellular location is the cell membrane. Its function is as follows. Macrophage receptor that binds to the apolipoprotein B48 (APOB) of dietary triglyceride (TG)-rich lipoproteins (TRL) or to a like domain of APOB in hypertriglyceridemic very low density lipoprotein (HTG-VLDL). Binds and internalizes TRL when out of the context of the macrophage. May provide essential lipids to reticuloendothelial cells. Could also be involved in foam cell formation with elevated TRL and remnant lipoprotein (RLP). Mediates the rapid high-affinity uptake of chylomicrons (CM), HTG-VLDL, and trypsinized (tryp) VLDL devoid of APOE in vitro in macrophages. In Homo sapiens (Human), this protein is Apolipoprotein B receptor.